Reading from the N-terminus, the 723-residue chain is LPS-assembly protein LptD (723 aa).

Residues 1–23 (MNTLKLCLILYACLVLLPVRVMS) form the signal peptide.

The protein belongs to the LptD family. As to quaternary structure, component of the lipopolysaccharide transport and assembly complex. Interacts with LptE and LptA.

The protein localises to the cell outer membrane. Its function is as follows. Together with LptE, is involved in the assembly of lipopolysaccharide (LPS) at the surface of the outer membrane. The chain is LPS-assembly protein LptD from Nitrosomonas europaea (strain ATCC 19718 / CIP 103999 / KCTC 2705 / NBRC 14298).